We begin with the raw amino-acid sequence, 197 residues long: Beta-crystallin A2 (197 aa).

Residues 1 to 11 are N-terminal arm; that stretch reads MSGTLSQGSSP. Beta/gamma crystallin 'Greek key' domains follow at residues 12-52 and 53-99; these read ARLT…KVES and GAWV…RPLL. The connecting peptide stretch occupies residues 100–105; sequence CANHSD. Beta/gamma crystallin 'Greek key' domains are found at residues 106–147 and 148–196; these read SRVT…KVTS and GAWV…RRVQ.

It belongs to the beta/gamma-crystallin family. As to quaternary structure, homo/heterodimer, or complexes of higher-order. The structure of beta-crystallin oligomers seems to be stabilized through interactions between the N-terminal arms.

In terms of biological role, crystallins are the dominant structural components of the vertebrate eye lens. The polypeptide is Beta-crystallin A2 (CRYBA2) (Macropus fuliginosus (Western gray kangaroo)).